Reading from the N-terminus, the 323-residue chain is MPLPAAAFARILVVSRQRLFNTRIIHTSGSGYSITQCRFYKTTPCLTHKQSQILDLDAPKSRENREKDGGKSKKSKKSIKWSTGSVLMLTIPVFAFSLGIWQTFRLKWKLDLIEHLKGRLNQTAQELPEDLSCESLEPLEYCRVTVTGEFLHEKEFIISPRGRFDPGKKTSAAAGSMLSENEMSSHGGHLITPFRLKNSGKIILINRGWLPSFYFDPETRQKTNPRGTLTLPAIVRKTEKRPQFVGQNVPEQGVWYYRDLNQMAKHYGTEPVLLDAAYETTVPGGPIGGQTNINVRNEHLNYLTTWFTLTLVTMLMWIHKFRK.

The span at 57–71 (DAPKSRENREKDGGK) shows a compositional bias: basic and acidic residues. The disordered stretch occupies residues 57–76 (DAPKSRENREKDGGKSKKSK). Helical transmembrane passes span 81–101 (WSTG…LGIW) and 299–319 (HLNY…MWIH).

The protein belongs to the SURF1 family.

Its subcellular location is the mitochondrion inner membrane. In terms of biological role, probably involved in the biogenesis of the COX complex. This chain is SURF1-like protein (sft-1), found in Caenorhabditis elegans.